A 608-amino-acid polypeptide reads, in one-letter code: Albumin (608 aa).

The signal sequence occupies residues 1–18; that stretch reads MKWVTFLLLLFISGSAFS. Residues 19-24 constitute a propeptide that is removed on maturation; sequence RGVFRR. 3 consecutive Albumin domains span residues 19–211, 212–403, and 404–601; these read RGVF…AVKE, KALV…EFQP, and LVEE…NLVA. His-27 contributes to the Cu cation binding site. Ser-29 carries the post-translational modification Phosphoserine. Ca(2+) contacts are provided by Glu-30 and Asp-37. Cysteines 77 and 86 form a disulfide. The residue at position 89 (Ser-89) is a Phosphoserine. Zn(2+) is bound at residue His-91. Cystine bridges form between Cys-99–Cys-115, Cys-114–Cys-125, Cys-148–Cys-193, Cys-192–Cys-201, Cys-224–Cys-270, and Cys-269–Cys-277. Glu-268 lines the Ca(2+) pocket. Zn(2+) contacts are provided by His-271 and Asp-273. Residues Asp-273, Glu-276, and Asp-279 each coordinate Ca(2+). Intrachain disulfides connect Cys-289–Cys-303, Cys-302–Cys-313, Cys-340–Cys-385, Cys-384–Cys-393, Cys-416–Cys-462, Cys-461–Cys-472, Cys-485–Cys-501, and Cys-500–Cys-511. Ser-297 carries the post-translational modification Phosphoserine. Position 443 is a phosphoserine (Ser-443). Residues Thr-444 and Thr-446 each carry the phosphothreonine modification. N6-succinyllysine is present on Lys-460. At Ser-513 the chain carries Phosphoserine. Intrachain disulfides connect Cys-538-Cys-583 and Cys-582-Cys-591. Lys-543 carries the N6-succinyllysine modification. Position 558 is an N6-methyllysine (Lys-558). Thr-570 is subject to Phosphothreonine. Lys-588 carries the post-translational modification N6-succinyllysine.

The protein belongs to the ALB/AFP/VDB family. In terms of assembly, interacts with FCGRT; this interaction regulates ALB homeostasis. Interacts with TASOR. In plasma, occurs in a covalently-linked complex with chromophore-bound alpha-1-microglobulin; this interaction does not prevent fatty acid binding to ALB. Post-translationally, phosphorylated by FAM20C in the extracellular medium. As to expression, plasma.

Its subcellular location is the secreted. Functionally, binds water, Ca(2+), Na(+), K(+), fatty acids, hormones, bilirubin and drugs. Its main function is the regulation of the colloidal osmotic pressure of blood. Major zinc transporter in plasma, typically binds about 80% of all plasma zinc. Major calcium and magnesium transporter in plasma, binds approximately 45% of circulating calcium and magnesium in plasma. Potentially has more than two calcium-binding sites and might additionally bind calcium in a non-specific manner. The shared binding site between zinc and calcium at residue Asp-273 suggests a crosstalk between zinc and calcium transport in the blood. The rank order of affinity is zinc &gt; calcium &gt; magnesium. Binds to the bacterial siderophore enterobactin and inhibits enterobactin-mediated iron uptake of E.coli from ferric transferrin, and may thereby limit the utilization of iron and growth of enteric bacteria such as E.coli. Does not prevent iron uptake by the bacterial siderophore aerobactin. The polypeptide is Albumin (Alb) (Rattus norvegicus (Rat)).